A 191-amino-acid chain; its full sequence is MQESTMTERQALETAVLGGGCFWCTEAVFQQVQGVHSVVSGYAGGHLERPTYRAVCGGDTGHAEVVRVEFDPAVIPYREILDIFFATHDPTTLERQGNDIGPQYRSAVFAQSPEQFAEAGATIRALSAANVFDAPIVTEVVDASGGKVPFWQAEDEHQNYFRDHPAQGYCAFVISPKVAKFRERFAHRLQA.

Cys21 is a catalytic residue.

The protein belongs to the MsrA Met sulfoxide reductase family.

The enzyme catalyses L-methionyl-[protein] + [thioredoxin]-disulfide + H2O = L-methionyl-(S)-S-oxide-[protein] + [thioredoxin]-dithiol. It carries out the reaction [thioredoxin]-disulfide + L-methionine + H2O = L-methionine (S)-S-oxide + [thioredoxin]-dithiol. Its function is as follows. Has an important function as a repair enzyme for proteins that have been inactivated by oxidation. Catalyzes the reversible oxidation-reduction of methionine sulfoxide in proteins to methionine. The sequence is that of Peptide methionine sulfoxide reductase MsrA from Ralstonia nicotianae (strain ATCC BAA-1114 / GMI1000) (Ralstonia solanacearum).